We begin with the raw amino-acid sequence, 616 residues long: Dihydroxy-acid dehydratase (616 aa).

D81 lines the Mg(2+) pocket. Position 122 (C122) interacts with [2Fe-2S] cluster. Mg(2+) contacts are provided by D123 and K124. At K124 the chain carries N6-carboxylysine. Position 195 (C195) interacts with [2Fe-2S] cluster. E491 is a binding site for Mg(2+). S517 functions as the Proton acceptor in the catalytic mechanism.

This sequence belongs to the IlvD/Edd family. As to quaternary structure, homodimer. The cofactor is [2Fe-2S] cluster. Requires Mg(2+) as cofactor.

It catalyses the reaction (2R)-2,3-dihydroxy-3-methylbutanoate = 3-methyl-2-oxobutanoate + H2O. It carries out the reaction (2R,3R)-2,3-dihydroxy-3-methylpentanoate = (S)-3-methyl-2-oxopentanoate + H2O. The protein operates within amino-acid biosynthesis; L-isoleucine biosynthesis; L-isoleucine from 2-oxobutanoate: step 3/4. Its pathway is amino-acid biosynthesis; L-valine biosynthesis; L-valine from pyruvate: step 3/4. Functions in the biosynthesis of branched-chain amino acids. Catalyzes the dehydration of (2R,3R)-2,3-dihydroxy-3-methylpentanoate (2,3-dihydroxy-3-methylvalerate) into 2-oxo-3-methylpentanoate (2-oxo-3-methylvalerate) and of (2R)-2,3-dihydroxy-3-methylbutanoate (2,3-dihydroxyisovalerate) into 2-oxo-3-methylbutanoate (2-oxoisovalerate), the penultimate precursor to L-isoleucine and L-valine, respectively. This Edwardsiella ictaluri (strain 93-146) protein is Dihydroxy-acid dehydratase.